The sequence spans 456 residues: Bifunctional protein GlmU (456 aa).

The interval Met1–Arg229 is pyrophosphorylase. UDP-N-acetyl-alpha-D-glucosamine-binding positions include Leu11–Gly14, Lys25, Gln76, Gly81–Thr82, Tyr103–Asp105, Gly140, Glu154, Asn169, and Asn227. Residue Asp105 participates in Mg(2+) binding. Asn227 lines the Mg(2+) pocket. The interval Leu230–Ser250 is linker. Residues Gly251–Lys456 form an N-acetyltransferase region. UDP-N-acetyl-alpha-D-glucosamine-binding residues include Arg333 and Lys351. Catalysis depends on His363, which acts as the Proton acceptor. Residues Tyr366 and Asn377 each coordinate UDP-N-acetyl-alpha-D-glucosamine. Acetyl-CoA-binding positions include Ala380, Asn386–Tyr387, Ser405, Ala423, and Arg440.

The protein in the N-terminal section; belongs to the N-acetylglucosamine-1-phosphate uridyltransferase family. It in the C-terminal section; belongs to the transferase hexapeptide repeat family. In terms of assembly, homotrimer. The cofactor is Mg(2+).

The protein localises to the cytoplasm. The enzyme catalyses alpha-D-glucosamine 1-phosphate + acetyl-CoA = N-acetyl-alpha-D-glucosamine 1-phosphate + CoA + H(+). It catalyses the reaction N-acetyl-alpha-D-glucosamine 1-phosphate + UTP + H(+) = UDP-N-acetyl-alpha-D-glucosamine + diphosphate. It functions in the pathway nucleotide-sugar biosynthesis; UDP-N-acetyl-alpha-D-glucosamine biosynthesis; N-acetyl-alpha-D-glucosamine 1-phosphate from alpha-D-glucosamine 6-phosphate (route II): step 2/2. The protein operates within nucleotide-sugar biosynthesis; UDP-N-acetyl-alpha-D-glucosamine biosynthesis; UDP-N-acetyl-alpha-D-glucosamine from N-acetyl-alpha-D-glucosamine 1-phosphate: step 1/1. Its pathway is bacterial outer membrane biogenesis; LPS lipid A biosynthesis. Functionally, catalyzes the last two sequential reactions in the de novo biosynthetic pathway for UDP-N-acetylglucosamine (UDP-GlcNAc). The C-terminal domain catalyzes the transfer of acetyl group from acetyl coenzyme A to glucosamine-1-phosphate (GlcN-1-P) to produce N-acetylglucosamine-1-phosphate (GlcNAc-1-P), which is converted into UDP-GlcNAc by the transfer of uridine 5-monophosphate (from uridine 5-triphosphate), a reaction catalyzed by the N-terminal domain. This Salmonella typhi protein is Bifunctional protein GlmU.